The sequence spans 385 residues: tRNA-specific 2-thiouridylase MnmA (385 aa).

ATP is bound by residues 12-19 and M38; that span reads GLSGGVDS. Residues 108–110 are interaction with target base in tRNA; that stretch reads NPD. The active-site Nucleophile is the C113. C113 and C210 are disulfide-bonded. Residue G138 coordinates ATP. Positions 160 to 162 are interaction with tRNA; sequence KDQ. C210 functions as the Cysteine persulfide intermediate in the catalytic mechanism.

It belongs to the MnmA/TRMU family.

Its subcellular location is the cytoplasm. It catalyses the reaction S-sulfanyl-L-cysteinyl-[protein] + uridine(34) in tRNA + AH2 + ATP = 2-thiouridine(34) in tRNA + L-cysteinyl-[protein] + A + AMP + diphosphate + H(+). Catalyzes the 2-thiolation of uridine at the wobble position (U34) of tRNA, leading to the formation of s(2)U34. The sequence is that of tRNA-specific 2-thiouridylase MnmA from Ureaplasma parvum serovar 3 (strain ATCC 27815 / 27 / NCTC 11736).